The chain runs to 241 residues: MRLPIRFPKYVLYGMASAVWSILFLHILVGDTMSAADALSWSGGLIHSPAHRVNVMRSHHHEMGKELEQQHGAEEQQMQRDTKPAAFSNPPHLATGRGPSFVHADGQLDVSCFPHDKNIGSRTTEVAVVQVSSVQDCMKQCQSRPTCSHFTYNKNSKACHLKDGAPVFYTYNGDMTGPRSCDYSCTDNCWMNSETAVKALDYSGHGPGLCWAACKGTAGCIMYTFKGSTCTLYAKDSFNKS.

The first 34 residues, 1–34 (MRLPIRFPKYVLYGMASAVWSILFLHILVGDTMS), serve as a signal peptide directing secretion. Residues 35–103 (AADALSWSGG…ATGRGPSFVH (69 aa)) constitute a propeptide that is removed on maturation. Residues 61–83 (HEMGKELEQQHGAEEQQMQRDTK) show a composition bias toward basic and acidic residues. Residues 61–92 (HEMGKELEQQHGAEEQQMQRDTKPAAFSNPPH) form a disordered region. PAN domains follow at residues 112-181 (CFPH…PRSC) and 185-241 (CTDN…FNKS). Cystine bridges form between cysteine 112-cysteine 181, cysteine 137-cysteine 159, cysteine 141-cysteine 147, cysteine 185-cysteine 189, cysteine 210-cysteine 230, and cysteine 214-cysteine 220. An a carbohydrate-binding site is contributed by serine 121. A carbohydrate is bound by residues lysine 162, tyrosine 169, and aspartate 174.

The protein belongs to the microneme antigen family. As to quaternary structure, homodimer or heterodimer of major microneme antigen and microneme antigen. Contains six disulfide bonds.

It localises to the cytoplasmic vesicle. It is found in the secretory vesicle. The protein resides in the microneme. Functionally, galactose-binding lectin. Plays a role in adhesion to the host cell. Has a potential role in invasion of host cells. This is Microneme antigen from Sarcocystis muris.